The sequence spans 599 residues: Aspartate--tRNA(Asp/Asn) ligase (599 aa).

Residue glutamate 169 coordinates L-aspartate. Residues 193-196 (QLFK) are aspartate. Arginine 215 provides a ligand contact to L-aspartate. ATP is bound by residues 215–217 (RDE) and glutamine 224. Histidine 447 is an L-aspartate binding site. Glutamate 481 serves as a coordination point for ATP. An L-aspartate-binding site is contributed by arginine 488. 533–536 (GWDR) contacts ATP.

Belongs to the class-II aminoacyl-tRNA synthetase family. Type 1 subfamily. In terms of assembly, homodimer.

It localises to the cytoplasm. The catalysed reaction is tRNA(Asx) + L-aspartate + ATP = L-aspartyl-tRNA(Asx) + AMP + diphosphate. Its function is as follows. Aspartyl-tRNA synthetase with relaxed tRNA specificity since it is able to aspartylate not only its cognate tRNA(Asp) but also tRNA(Asn). Reaction proceeds in two steps: L-aspartate is first activated by ATP to form Asp-AMP and then transferred to the acceptor end of tRNA(Asp/Asn). The protein is Aspartate--tRNA(Asp/Asn) ligase of Pseudarthrobacter chlorophenolicus (strain ATCC 700700 / DSM 12829 / CIP 107037 / JCM 12360 / KCTC 9906 / NCIMB 13794 / A6) (Arthrobacter chlorophenolicus).